Reading from the N-terminus, the 1080-residue chain is DNA-directed RNA polymerase subunit beta C-terminal section (1080 aa).

This sequence belongs to the RNA polymerase beta chain family. In plastids the minimal PEP RNA polymerase catalytic core is composed of four subunits: alpha, beta, beta', and beta''. When a (nuclear-encoded) sigma factor is associated with the core the holoenzyme is formed, which can initiate transcription.

The protein resides in the plastid. It localises to the chloroplast. It carries out the reaction RNA(n) + a ribonucleoside 5'-triphosphate = RNA(n+1) + diphosphate. Its function is as follows. DNA-dependent RNA polymerase catalyzes the transcription of DNA into RNA using the four ribonucleoside triphosphates as substrates. In Stigeoclonium helveticum (Green alga), this protein is DNA-directed RNA polymerase subunit beta C-terminal section (rpoB2).